Consider the following 565-residue polypeptide: Adenine deaminase 1 (565 aa).

It belongs to the metallo-dependent hydrolases superfamily. Adenine deaminase family. It depends on Mn(2+) as a cofactor.

The enzyme catalyses adenine + H2O + H(+) = hypoxanthine + NH4(+). In Rhizobium meliloti (strain 1021) (Ensifer meliloti), this protein is Adenine deaminase 1.